Consider the following 227-residue polypeptide: Thiamine-phosphate synthase (227 aa).

4-amino-2-methyl-5-(diphosphooxymethyl)pyrimidine-binding positions include 46 to 50 and N87; that span reads QLRDK. Residues D88 and D107 each contribute to the Mg(2+) site. S126 serves as a coordination point for 4-amino-2-methyl-5-(diphosphooxymethyl)pyrimidine. 152-154 is a 2-[(2R,5Z)-2-carboxy-4-methylthiazol-5(2H)-ylidene]ethyl phosphate binding site; sequence TPT. Position 155 (K155) interacts with 4-amino-2-methyl-5-(diphosphooxymethyl)pyrimidine. G183 contributes to the 2-[(2R,5Z)-2-carboxy-4-methylthiazol-5(2H)-ylidene]ethyl phosphate binding site.

This sequence belongs to the thiamine-phosphate synthase family. It depends on Mg(2+) as a cofactor.

The enzyme catalyses 2-[(2R,5Z)-2-carboxy-4-methylthiazol-5(2H)-ylidene]ethyl phosphate + 4-amino-2-methyl-5-(diphosphooxymethyl)pyrimidine + 2 H(+) = thiamine phosphate + CO2 + diphosphate. It catalyses the reaction 2-(2-carboxy-4-methylthiazol-5-yl)ethyl phosphate + 4-amino-2-methyl-5-(diphosphooxymethyl)pyrimidine + 2 H(+) = thiamine phosphate + CO2 + diphosphate. The catalysed reaction is 4-methyl-5-(2-phosphooxyethyl)-thiazole + 4-amino-2-methyl-5-(diphosphooxymethyl)pyrimidine + H(+) = thiamine phosphate + diphosphate. It participates in cofactor biosynthesis; thiamine diphosphate biosynthesis; thiamine phosphate from 4-amino-2-methyl-5-diphosphomethylpyrimidine and 4-methyl-5-(2-phosphoethyl)-thiazole: step 1/1. Its function is as follows. Condenses 4-methyl-5-(beta-hydroxyethyl)thiazole monophosphate (THZ-P) and 2-methyl-4-amino-5-hydroxymethyl pyrimidine pyrophosphate (HMP-PP) to form thiamine monophosphate (TMP). The polypeptide is Thiamine-phosphate synthase (Mycolicibacterium smegmatis (strain ATCC 700084 / mc(2)155) (Mycobacterium smegmatis)).